The following is a 626-amino-acid chain: Membrane protein insertase YidC (626 aa).

The next 5 membrane-spanning stretches (helical) occupy residues 8–28 (LILA…LFPP), 399–419 (MGLA…PLAY), 469–489 (LPIL…FVTL), 527–547 (SIMA…SMWL), and 563–583 (IFAW…SGLL).

This sequence belongs to the OXA1/ALB3/YidC family. Type 1 subfamily. Interacts with the Sec translocase complex via SecD. Specifically interacts with transmembrane segments of nascent integral membrane proteins during membrane integration.

It localises to the cell inner membrane. Functionally, required for the insertion and/or proper folding and/or complex formation of integral membrane proteins into the membrane. Involved in integration of membrane proteins that insert both dependently and independently of the Sec translocase complex, as well as at least some lipoproteins. Aids folding of multispanning membrane proteins. The sequence is that of Membrane protein insertase YidC from Jannaschia sp. (strain CCS1).